Here is a 260-residue protein sequence, read N- to C-terminus: Zinc finger protein 575 (260 aa).

Residues 22-81 are disordered; that stretch reads PGLGPGRWLLPGAHQPSCPPAPHQGPLQKPSQSAPGPTASASAPPRPRRRPPPQRPHRCP. Residues 51–64 show a composition bias toward low complexity; sequence PSQSAPGPTASASA. The segment covering 67 to 78 has biased composition (basic residues); the sequence is RPRRRPPPQRPH. C2H2-type zinc fingers lie at residues 78-100, 106-128, 134-156, 162-184, 192-214, and 228-255; these read HRCPDCDKAFSYPSKLATHRLAH, HPCPDCPKAFSYPSKLAAHRLTH, HPCPHCPKAFGHRSKLAAHLWTH, YPCPDCPKSFCYPSKLAAHRHTH, YPCPHCPKAFSFPSKLAAHRLCH, and HRCSSCGQAFGQRRLLLLHQRSHHQVEH.

Belongs to the krueppel C2H2-type zinc-finger protein family.

The protein localises to the nucleus. Functionally, may be involved in transcriptional regulation. The protein is Zinc finger protein 575 (ZNF575) of Macaca fascicularis (Crab-eating macaque).